Reading from the N-terminus, the 728-residue chain is MDNPTDTAGKCPVAHGNKPRGPSNRDWWPNQLNVQILHHNSGRADPMGKDFDYAEEFKKLDLDALKKDLTALMTDSQDWWPADFGHYGGLFIRMAWHSAGTYRITDGRGGAGQGQQRFAPLNSWPDNANLDKARRLLWPIKQKYGNRISWADLLILTGNVALESMGFKTFGFAGGRADVWEPEELYWGPEGTWLGDERYSGERQLAEPLGAVQMGLIYVNPEGPGGNPDPLASARDIRETFARMAMNDEETVALIAGGHTFGKTHGAGDPSFIGAEPEGGAIEDQGLGWKSSFGSGVGKDAITAGLEVTWSQTPTKWSNYFFENLFAYEWELTKSPAGAHQWQAKNAEASIPDAYEAGKKHLPTMLTSDLALRFDPIYEKISRRFLENPDQFADAFARAWFKLTHRDMGPKVRYLGPEVPAEDLIWQDVIPAVDHPLVGDKDIAELKAKVLATGLSVQELVSTAWASASTFRGSDKRGGANGARIRLAPQKDWDANQPAQLAKVLGVLEGLQKDFNAAQTGGKKISLADMIVLAGAAGVEKAAAAGGTTVSVPFTPGRMDASEAQTDAHSFAALEPRIDGFRNYVNDKRLQFMKPEEALVDRAQLLTLTGPEMTVLVGGLRVLKAGQPEHGVFTARPETLTNDFFVNLLDMATQWVPAAGKDGVYEGRDRKTGAAKWTGTRVDLIFGSHSQLRAFAEVYGQADAKEKFVKDFVAAWNKVMNADRFDLV.

Residues 1–26 (MDNPTDTAGKCPVAHGNKPRGPSNRD) form a disordered region. Residues 96-218 (WHSAGTYRIT…LGAVQMGLIY (123 aa)) constitute a cross-link (tryptophyl-tyrosyl-methioninium (Trp-Tyr) (with M-244)). H97 acts as the Proton acceptor in catalysis. The segment at residues 218-244 (YVNPEGPGGNPDPLASARDIRETFARM) is a cross-link (tryptophyl-tyrosyl-methioninium (Tyr-Met) (with W-96)). A heme b-binding site is contributed by H259.

This sequence belongs to the peroxidase family. Peroxidase/catalase subfamily. Homodimer or homotetramer. Requires heme b as cofactor. Formation of the three residue Trp-Tyr-Met cross-link is important for the catalase, but not the peroxidase activity of the enzyme.

The catalysed reaction is H2O2 + AH2 = A + 2 H2O. The enzyme catalyses 2 H2O2 = O2 + 2 H2O. Functionally, bifunctional enzyme with both catalase and broad-spectrum peroxidase activity. The sequence is that of Catalase-peroxidase from Rhizobium etli (strain CIAT 652).